The sequence spans 117 residues: Acidic phospholipase A2 PA-1G (117 aa).

7 disulfides stabilise this stretch: Cys-11/Cys-71, Cys-27/Cys-117, Cys-29/Cys-45, Cys-44/Cys-98, Cys-51/Cys-91, Cys-60/Cys-84, and Cys-78/Cys-89. Positions 28, 30, and 32 each coordinate Ca(2+). Residue His-48 is part of the active site. Asp-49 is a Ca(2+) binding site. Asp-92 is a catalytic residue.

The protein belongs to the phospholipase A2 family. Group I subfamily. D49 sub-subfamily. Requires Ca(2+) as cofactor. As to expression, expressed by the venom gland.

The protein localises to the secreted. The catalysed reaction is a 1,2-diacyl-sn-glycero-3-phosphocholine + H2O = a 1-acyl-sn-glycero-3-phosphocholine + a fatty acid + H(+). Its function is as follows. PLA2 catalyzes the calcium-dependent hydrolysis of the 2-acyl groups in 3-sn-phosphoglycerides. This chain is Acidic phospholipase A2 PA-1G, found in Pseudechis australis (Mulga snake).